The sequence spans 176 residues: NAD(P)H-quinone oxidoreductase subunit 6, chloroplastic (176 aa).

5 helical membrane passes run 10–30 (FLLV…VLLP), 32–52 (PIFS…LYIL), 61–81 (AQLL…VMFM), 92–112 (LWTI…FLLM), and 152–172 (FFLP…GAIS).

The protein belongs to the complex I subunit 6 family. NDH is composed of at least 16 different subunits, 5 of which are encoded in the nucleus.

The protein resides in the plastid. Its subcellular location is the chloroplast thylakoid membrane. The catalysed reaction is a plastoquinone + NADH + (n+1) H(+)(in) = a plastoquinol + NAD(+) + n H(+)(out). The enzyme catalyses a plastoquinone + NADPH + (n+1) H(+)(in) = a plastoquinol + NADP(+) + n H(+)(out). Its function is as follows. NDH shuttles electrons from NAD(P)H:plastoquinone, via FMN and iron-sulfur (Fe-S) centers, to quinones in the photosynthetic chain and possibly in a chloroplast respiratory chain. The immediate electron acceptor for the enzyme in this species is believed to be plastoquinone. Couples the redox reaction to proton translocation, and thus conserves the redox energy in a proton gradient. This Arabidopsis thaliana (Mouse-ear cress) protein is NAD(P)H-quinone oxidoreductase subunit 6, chloroplastic (ndhG).